Consider the following 375-residue polypeptide: 1-deoxy-D-xylulose 5-phosphate reductoisomerase (375 aa).

6 residues coordinate NADPH: Thr10, Gly11, Ser12, Val13, Lys37, and Asn114. Residue Lys115 participates in 1-deoxy-D-xylulose 5-phosphate binding. Glu116 is an NADPH binding site. Asp136 serves as a coordination point for Mn(2+). 1-deoxy-D-xylulose 5-phosphate-binding residues include Ser137, Glu138, Ser162, and His185. Glu138 is a binding site for Mn(2+). Gly191 is an NADPH binding site. Ser198, Asn203, Lys204, and Glu207 together coordinate 1-deoxy-D-xylulose 5-phosphate. Residue Glu207 coordinates Mn(2+).

The protein belongs to the DXR family. Mg(2+) is required as a cofactor. Mn(2+) serves as cofactor.

It carries out the reaction 2-C-methyl-D-erythritol 4-phosphate + NADP(+) = 1-deoxy-D-xylulose 5-phosphate + NADPH + H(+). Its pathway is isoprenoid biosynthesis; isopentenyl diphosphate biosynthesis via DXP pathway; isopentenyl diphosphate from 1-deoxy-D-xylulose 5-phosphate: step 1/6. In terms of biological role, catalyzes the NADPH-dependent rearrangement and reduction of 1-deoxy-D-xylulose-5-phosphate (DXP) to 2-C-methyl-D-erythritol 4-phosphate (MEP). This is 1-deoxy-D-xylulose 5-phosphate reductoisomerase from Sulfurihydrogenibium sp. (strain YO3AOP1).